The following is a 231-amino-acid chain: Ribosome maturation factor RimM (231 aa).

Positions 1–29 (MSERDSGSSGRAKAKRQPGAKAPFGPFVR) are disordered. The region spanning 150–231 (TDEYYWVDLV…KIIVDWEADY (82 aa)) is the PRC barrel domain.

This sequence belongs to the RimM family. Binds ribosomal protein uS19.

Its subcellular location is the cytoplasm. Functionally, an accessory protein needed during the final step in the assembly of 30S ribosomal subunit, possibly for assembly of the head region. Essential for efficient processing of 16S rRNA. May be needed both before and after RbfA during the maturation of 16S rRNA. It has affinity for free ribosomal 30S subunits but not for 70S ribosomes. This is Ribosome maturation factor RimM from Paraburkholderia phymatum (strain DSM 17167 / CIP 108236 / LMG 21445 / STM815) (Burkholderia phymatum).